The sequence spans 481 residues: Sterol 14-alpha demethylase (481 aa).

Residues 1 to 21 (MFIEAIVLALTALILYSVYSV) form a helical membrane-spanning segment. Cysteine 422 serves as a coordination point for heme.

This sequence belongs to the cytochrome P450 family. It depends on heme as a cofactor.

It localises to the membrane. It carries out the reaction a 14alpha-methyl steroid + 3 reduced [NADPH--hemoprotein reductase] + 3 O2 = a Delta(14) steroid + formate + 3 oxidized [NADPH--hemoprotein reductase] + 4 H2O + 4 H(+). Its pathway is steroid biosynthesis; zymosterol biosynthesis; zymosterol from lanosterol: step 1/6. In terms of biological role, catalyzes C14-demethylation of lanosterol which is critical for ergosterol biosynthesis. It transforms lanosterol into 4,4'-dimethyl cholesta-8,14,24-triene-3-beta-ol. Favors C4 dimethylated substrates, the substrate preference order is 24-methylenedihydrolanosterol &gt; 24,25-dihydrolanosterol &gt; lanosterol &gt; obtusifoliol &gt; norlanosterol. This is Sterol 14-alpha demethylase from Trypanosoma cruzi (strain CL Brener).